The sequence spans 320 residues: tRNA dimethylallyltransferase (320 aa).

Residue 5-12 coordinates ATP; that stretch reads GPTAVGKS. 7–12 contributes to the substrate binding site; sequence TAVGKS. The interaction with substrate tRNA stretch occupies residues 30–33; the sequence is DSMQ.

It belongs to the IPP transferase family. As to quaternary structure, monomer. Requires Mg(2+) as cofactor.

It catalyses the reaction adenosine(37) in tRNA + dimethylallyl diphosphate = N(6)-dimethylallyladenosine(37) in tRNA + diphosphate. Its function is as follows. Catalyzes the transfer of a dimethylallyl group onto the adenine at position 37 in tRNAs that read codons beginning with uridine, leading to the formation of N6-(dimethylallyl)adenosine (i(6)A). The sequence is that of tRNA dimethylallyltransferase from Heliobacterium modesticaldum (strain ATCC 51547 / Ice1).